A 195-amino-acid polypeptide reads, in one-letter code: uncharacterized protein (195 aa).

Residues 1 to 17 (MKASLITAFVLPLLALA) form the signal peptide. N-linked (GlcNAc...) asparagine glycosylation occurs at Asn-75.

The protein resides in the secreted. This is an uncharacterized protein from Arthroderma benhamiae (strain ATCC MYA-4681 / CBS 112371) (Trichophyton mentagrophytes).